Here is a 472-residue protein sequence, read N- to C-terminus: uncharacterized protein (472 aa).

The next 14 membrane-spanning stretches (helical) occupy residues 14–34 (VIVG…TLLI), 53–73 (WLTT…AFLI), 80–100 (ALLI…AFAP), 113–133 (AAGA…IFPI), 142–162 (MVGL…GWAV), 169–189 (SLFY…SILM), 202–222 (ILSV…FSSV), 227–247 (WSSS…LLFI), 263–283 (FTFG…ALLI), 302–322 (FDTG…SPII), 333–353 (GLAI…MQLT), 359–379 (AWIV…MMPV), 405–427 (VGGS…HAGT), and 437–457 (GMNA…LLSF).

The protein belongs to the major facilitator superfamily. EmrB family.

The protein resides in the cell membrane. This is an uncharacterized protein from Bacillus subtilis (strain 168).